Consider the following 52-residue polypeptide: Light-harvesting protein B800/830/1020 alpha-1 chain (52 aa).

At 1–12 (MWRIWKVFDPRR) the chain is on the cytoplasmic side. A helical membrane pass occupies residues 13–33 (ILIATAIWLIIIALTIHVILM). Histidine 29 contributes to the a bacteriochlorophyll binding site. The Periplasmic portion of the chain corresponds to 34–52 (TTERFNWLEGAPAAEYYSS).

The protein belongs to the antenna complex alpha subunit family. In terms of assembly, the core complex is formed by different alpha and beta chains, binding bacteriochlorophyll molecules, and arranged most probably in tetrameric structures disposed around the reaction center. The non-pigmented gamma chains may constitute additional components.

Its subcellular location is the cell inner membrane. In terms of biological role, antenna complexes are light-harvesting systems, which transfer the excitation energy to the reaction centers. This Halorhodospira halochloris (Ectothiorhodospira halochloris) protein is Light-harvesting protein B800/830/1020 alpha-1 chain.